The chain runs to 654 residues: Peptide-N(4)-(N-acetyl-beta-glucosaminyl)asparagine amidase (654 aa).

Ala2 carries the N-acetylalanine modification. A PUB domain is found at 30–91 (EASKLLLTYA…EGETHLIFPK (62 aa)). Residues 112–163 (RLDGSNKSHKVKSSQQPAASTQLPTTPSSNPSGLNQHTRNRQGQSSDPPSAS) form a disordered region. Polar residues predominate over residues 124 to 163 (SSQQPAASTQLPTTPSSNPSGLNQHTRNRQGQSSDPPSAS). The residue at position 137 (Thr137) is a Phosphothreonine. Zn(2+) contacts are provided by Cys250, Cys253, Cys283, and Cys286. Cys309 (nucleophile) is an active-site residue. Catalysis depends on residues His336 and Asp353. The 201-residue stretch at 454-654 (ELGGRISGSV…LEIIIKFSDL (201 aa)) folds into the PAW domain.

This sequence belongs to the transglutaminase-like superfamily. PNGase family. Component of a complex required to couple retrotranslocation, ubiquitination and deglycosylation composed of NGLY1, SAKS1, AMFR, VCP and RAD23B. Interacts with the proteasome components RAD23B and PSMC1. Interacts with directly with VCP. Interacts with DERL1, bringing it close to the endoplasmic reticulum membrane. Interacts with SAKS1. Zn(2+) serves as cofactor.

The protein resides in the cytoplasm. The enzyme catalyses Hydrolysis of an N(4)-(acetyl-beta-D-glucosaminyl)asparagine residue in which the glucosamine residue may be further glycosylated, to yield a (substituted) N-acetyl-beta-D-glucosaminylamine and a peptide containing an aspartate residue.. With respect to regulation, inhibited by Z-VAD-fmk, a well-known caspase inhibitor, which inhibits enzyme activity through covalent binding of the carbohydrate to the single Cys-306 residue. Functionally, specifically deglycosylates the denatured form of N-linked glycoproteins in the cytoplasm and assists their proteasome-mediated degradation. Cleaves the beta-aspartyl-glucosamine (GlcNAc) of the glycan and the amide side chain of Asn, converting Asn to Asp. Prefers proteins containing high-mannose over those bearing complex type oligosaccharides. Can recognize misfolded proteins in the endoplasmic reticulum that are exported to the cytosol to be destroyed and deglycosylate them, while it has no activity toward native proteins. Deglycosylation is a prerequisite for subsequent proteasome-mediated degradation of some, but not all, misfolded glycoproteins. The sequence is that of Peptide-N(4)-(N-acetyl-beta-glucosaminyl)asparagine amidase (NGLY1) from Homo sapiens (Human).